The following is a 453-amino-acid chain: Allantoinase (453 aa).

Zn(2+) contacts are provided by histidine 59, histidine 61, lysine 146, histidine 186, histidine 242, and aspartate 315. Residue lysine 146 is modified to N6-carboxylysine.

The protein belongs to the metallo-dependent hydrolases superfamily. Allantoinase family. As to quaternary structure, homotetramer. Requires Zn(2+) as cofactor. Post-translationally, carboxylation allows a single lysine to coordinate two zinc ions.

It catalyses the reaction (S)-allantoin + H2O = allantoate + H(+). The protein operates within nitrogen metabolism; (S)-allantoin degradation; allantoate from (S)-allantoin: step 1/1. In terms of biological role, catalyzes the conversion of allantoin (5-ureidohydantoin) to allantoic acid by hydrolytic cleavage of the five-member hydantoin ring. The protein is Allantoinase of Escherichia coli (strain 55989 / EAEC).